The primary structure comprises 90 residues: Small ribosomal subunit protein bS16 (90 aa).

Belongs to the bacterial ribosomal protein bS16 family.

The chain is Small ribosomal subunit protein bS16 from Listeria monocytogenes serotype 4b (strain F2365).